A 60-amino-acid polypeptide reads, in one-letter code: Potassium channel toxin alpha-KTx 12.7 (60 aa).

Positions 1 to 22 (MSNMPVLIITLLLFSMYISTAA) are cleaved as a signal peptide. 3 cysteine pairs are disulfide-bonded: Cys-30–Cys-51, Cys-36–Cys-56, and Cys-40–Cys-58.

This sequence belongs to the short scorpion toxin superfamily. Potassium channel inhibitor family. Alpha-KTx 12 subfamily. In terms of tissue distribution, expressed by the venom gland.

The protein localises to the secreted. In terms of biological role, inhibits voltage-gated potassium channels. The sequence is that of Potassium channel toxin alpha-KTx 12.7 from Lychas mucronatus (Chinese swimming scorpion).